The following is a 278-amino-acid chain: NAD kinase (278 aa).

The Proton acceptor role is filled by D67. Residues 67–68 (DG), R72, 137–138 (NE), K148, R165, D167, 178–183 (TGYALS), and Q237 each bind NAD(+).

Belongs to the NAD kinase family. It depends on a divalent metal cation as a cofactor.

It localises to the cytoplasm. The enzyme catalyses NAD(+) + ATP = ADP + NADP(+) + H(+). In terms of biological role, involved in the regulation of the intracellular balance of NAD and NADP, and is a key enzyme in the biosynthesis of NADP. Catalyzes specifically the phosphorylation on 2'-hydroxyl of the adenosine moiety of NAD to yield NADP. The polypeptide is NAD kinase (Thermococcus gammatolerans (strain DSM 15229 / JCM 11827 / EJ3)).